The following is a 75-amino-acid chain: U9-theraphotoxin-Cg1a (75 aa).

A signal peptide spans 1–21; that stretch reads MKTLVLFIIFGLAALFLLSSA. A propeptide spanning residues 22–29 is cleaved from the precursor; sequence NELEETER. 3 cysteine pairs are disulfide-bonded: cysteine 31–cysteine 46, cysteine 38–cysteine 51, and cysteine 45–cysteine 58.

Belongs to the neurotoxin 10 (Hwtx-1) family. 43 (Jztx-49) subfamily. In terms of tissue distribution, expressed by the venom gland.

The protein resides in the secreted. Its function is as follows. Probable ion channel inhibitor. The sequence is that of U9-theraphotoxin-Cg1a from Chilobrachys guangxiensis (Chinese earth tiger tarantula).